We begin with the raw amino-acid sequence, 144 residues long: 3-hydroxyacyl-[acyl-carrier-protein] dehydratase FabZ (144 aa).

His-48 is an active-site residue.

Belongs to the thioester dehydratase family. FabZ subfamily.

It localises to the cytoplasm. It catalyses the reaction a (3R)-hydroxyacyl-[ACP] = a (2E)-enoyl-[ACP] + H2O. In terms of biological role, involved in unsaturated fatty acids biosynthesis. Catalyzes the dehydration of short chain beta-hydroxyacyl-ACPs and long chain saturated and unsaturated beta-hydroxyacyl-ACPs. The sequence is that of 3-hydroxyacyl-[acyl-carrier-protein] dehydratase FabZ from Bacillus licheniformis (strain ATCC 14580 / DSM 13 / JCM 2505 / CCUG 7422 / NBRC 12200 / NCIMB 9375 / NCTC 10341 / NRRL NRS-1264 / Gibson 46).